A 126-amino-acid polypeptide reads, in one-letter code: Cell cycle protein GpsB (126 aa).

Residues 35–72 are a coiled coil; it reads LDLVIKDYQTYQENIDRLTADNTRLFNKVEELNRQLSA.

The protein belongs to the GpsB family. In terms of assembly, forms polymers through the coiled coil domains. Interacts with PBP1, MreC and EzrA.

The protein localises to the cytoplasm. In terms of biological role, divisome component that associates with the complex late in its assembly, after the Z-ring is formed, and is dependent on DivIC and PBP2B for its recruitment to the divisome. Together with EzrA, is a key component of the system that regulates PBP1 localization during cell cycle progression. Its main role could be the removal of PBP1 from the cell pole after pole maturation is completed. Also contributes to the recruitment of PBP1 to the division complex. Not essential for septum formation. The protein is Cell cycle protein GpsB of Latilactobacillus sakei subsp. sakei (strain 23K) (Lactobacillus sakei subsp. sakei).